The following is a 768-amino-acid chain: Phosphoribosylformylglycinamidine synthase subunit PurL (768 aa).

His-48 is an active-site residue. ATP-binding residues include Tyr-51 and Lys-90. Glu-92 contacts Mg(2+). Substrate-binding positions include Ser-93–His-96 and Arg-115. The Proton acceptor role is filled by His-94. Residue Asp-116 participates in Mg(2+) binding. Gln-239 lines the substrate pocket. Residue Asp-267 participates in Mg(2+) binding. Residue Glu-311–Gln-313 participates in substrate binding. ATP-binding residues include Asp-507 and Gly-544. A Mg(2+)-binding site is contributed by Asn-545. Substrate is bound at residue Ser-547.

It belongs to the FGAMS family. In terms of assembly, monomer. Part of the FGAM synthase complex composed of 1 PurL, 1 PurQ and 2 PurS subunits.

Its subcellular location is the cytoplasm. The catalysed reaction is N(2)-formyl-N(1)-(5-phospho-beta-D-ribosyl)glycinamide + L-glutamine + ATP + H2O = 2-formamido-N(1)-(5-O-phospho-beta-D-ribosyl)acetamidine + L-glutamate + ADP + phosphate + H(+). It functions in the pathway purine metabolism; IMP biosynthesis via de novo pathway; 5-amino-1-(5-phospho-D-ribosyl)imidazole from N(2)-formyl-N(1)-(5-phospho-D-ribosyl)glycinamide: step 1/2. Functionally, part of the phosphoribosylformylglycinamidine synthase complex involved in the purines biosynthetic pathway. Catalyzes the ATP-dependent conversion of formylglycinamide ribonucleotide (FGAR) and glutamine to yield formylglycinamidine ribonucleotide (FGAM) and glutamate. The FGAM synthase complex is composed of three subunits. PurQ produces an ammonia molecule by converting glutamine to glutamate. PurL transfers the ammonia molecule to FGAR to form FGAM in an ATP-dependent manner. PurS interacts with PurQ and PurL and is thought to assist in the transfer of the ammonia molecule from PurQ to PurL. This is Phosphoribosylformylglycinamidine synthase subunit PurL from Parasynechococcus marenigrum (strain WH8102).